The chain runs to 195 residues: Thioredoxin reductase-like selenoprotein T (195 aa).

The N-terminal stretch at methionine 1–alanine 19 is a signal peptide. A cross-link (cysteinyl-selenocysteine (Cys-Sec)) is located at residues cysteine 46 to selenocysteine 49. Residue selenocysteine 49 is a non-standard amino acid, selenocysteine. The chain crosses the membrane as a helical span at residues isoleucine 85–glycine 103.

The protein belongs to the SelWTH family. Selenoprotein T subfamily. Post-translationally, may contain a selenide-sulfide bond between Cys-46 and Sec-49. This bond is speculated to serve as redox-active pair.

It localises to the endoplasmic reticulum membrane. The enzyme catalyses [thioredoxin]-dithiol + NADP(+) = [thioredoxin]-disulfide + NADPH + H(+). Selenoprotein with thioredoxin reductase-like oxidoreductase activity. Protects dopaminergic neurons against oxidative stress and cell death. Involved in ADCYAP1/PACAP-induced calcium mobilization and neuroendocrine secretion. Plays a role in fibroblast anchorage and redox regulation. In gastric smooth muscle, modulates the contraction processes through the regulation of calcium release and MYLK activation. In pancreatic islets, involved in the control of glucose homeostasis, contributes to prolonged ADCYAP1/PACAP-induced insulin secretion. The sequence is that of Thioredoxin reductase-like selenoprotein T from Bos taurus (Bovine).